The primary structure comprises 258 residues: Ribose-5-phosphate isomerase (258 aa).

Belongs to the ribose 5-phosphate isomerase family.

The protein localises to the cytoplasm. It carries out the reaction aldehydo-D-ribose 5-phosphate = D-ribulose 5-phosphate. Its pathway is carbohydrate degradation; pentose phosphate pathway; D-ribose 5-phosphate from D-ribulose 5-phosphate (non-oxidative stage): step 1/1. This chain is Ribose-5-phosphate isomerase (RKI1), found in Saccharomyces cerevisiae (strain YJM789) (Baker's yeast).